The primary structure comprises 471 residues: Probable pyruvate, phosphate dikinase regulatory protein, chloroplastic (471 aa).

The transit peptide at 1 to 49 (MSSSSSTSPRFGSMISAKLASPPPSLLLPPSPRLQGRRLTPPSCTPGTP) directs the protein to the chloroplast. The disordered stretch occupies residues 1–133 (MSSSSSTSPR…PHPSSDEAAS (133 aa)). Residues 21 to 32 (SPPPSLLLPPSP) show a composition bias toward pro residues. A compositionally biased stretch (polar residues) spans 71-88 (GSATTPRSPAQLGSSQLH). Residues 89-99 (RWSRARAHRSG) show a composition bias toward basic residues. Positions 100–111 (RRLEWPTIRDRG) are enriched in basic and acidic residues. 171 to 178 (HSVNAALG) provides a ligand contact to ADP.

This sequence belongs to the pyruvate, phosphate/water dikinase regulatory protein family. PDRP subfamily.

The protein resides in the plastid. It localises to the chloroplast. It catalyses the reaction N(tele)-phospho-L-histidyl/L-threonyl-[pyruvate, phosphate dikinase] + ADP = N(tele)-phospho-L-histidyl/O-phospho-L-threonyl-[pyruvate, phosphate dikinase] + AMP + H(+). It carries out the reaction N(tele)-phospho-L-histidyl/O-phospho-L-threonyl-[pyruvate, phosphate dikinase] + phosphate + H(+) = N(tele)-phospho-L-histidyl/L-threonyl-[pyruvate, phosphate dikinase] + diphosphate. With respect to regulation, regulated by light/dark exposure. In terms of biological role, bifunctional serine/threonine kinase and phosphorylase involved in the dark/light-mediated regulation of PPDK by catalyzing its phosphorylation/dephosphorylation. Dark/light-induced changes in stromal concentrations of the competing ADP and Pi substrates govern the direction of the reaction. In the dark, phosphorylates the catalytic intermediate of PPDK (PPDK-HisP), inactivating it. Light exposure induces the phosphorolysis reaction that reactivates PPDK. The protein is Probable pyruvate, phosphate dikinase regulatory protein, chloroplastic (PDRP1) of Oryza sativa subsp. indica (Rice).